Here is a 421-residue protein sequence, read N- to C-terminus: UDP-N-acetylglucosamine 1-carboxyvinyltransferase (421 aa).

A phosphoenolpyruvate-binding site is contributed by 22 to 23; sequence KN. Arginine 93 lines the UDP-N-acetyl-alpha-D-glucosamine pocket. Residue cysteine 117 is the Proton donor of the active site. Cysteine 117 bears the 2-(S-cysteinyl)pyruvic acid O-phosphothioketal mark. Residues 122-126, aspartate 308, and isoleucine 330 contribute to the UDP-N-acetyl-alpha-D-glucosamine site; that span reads RPVDL.

It belongs to the EPSP synthase family. MurA subfamily.

It localises to the cytoplasm. It catalyses the reaction phosphoenolpyruvate + UDP-N-acetyl-alpha-D-glucosamine = UDP-N-acetyl-3-O-(1-carboxyvinyl)-alpha-D-glucosamine + phosphate. The protein operates within cell wall biogenesis; peptidoglycan biosynthesis. Its function is as follows. Cell wall formation. Adds enolpyruvyl to UDP-N-acetylglucosamine. The sequence is that of UDP-N-acetylglucosamine 1-carboxyvinyltransferase from Pseudomonas fluorescens (strain Pf0-1).